Here is a 117-residue protein sequence, read N- to C-terminus: Large ribosomal subunit protein uL18 (117 aa).

The protein belongs to the universal ribosomal protein uL18 family. Part of the 50S ribosomal subunit; part of the 5S rRNA/L5/L18/L25 subcomplex. Contacts the 5S and 23S rRNAs.

Functionally, this is one of the proteins that bind and probably mediate the attachment of the 5S RNA into the large ribosomal subunit, where it forms part of the central protuberance. The polypeptide is Large ribosomal subunit protein uL18 (Vibrio cholerae serotype O1 (strain ATCC 39541 / Classical Ogawa 395 / O395)).